A 282-amino-acid polypeptide reads, in one-letter code: Protein-glutamine deamidase Cif (282 aa).

The interval 1-16 (MKDITLPPPTSASCLT) is translocation domain (TD). Residues C109, H165, and Q185 contribute to the active site.

The protein belongs to the Cif family.

The protein resides in the secreted. It is found in the host nucleus. The catalysed reaction is L-glutaminyl-[protein] + H2O = L-glutamyl-[protein] + NH4(+). Protein-glutamine deamidase effector that inhibits the host cell cycle and other key cellular processes such as the actin network and programmed-cell death. Acts by mediating the side chain deamidation of 'Gln-40' of host NEDD8, converting it to glutamate, thereby abolishing the activity of cullin-RING-based E3 ubiquitin-protein ligase complexes (CRL complexes). Inactivation of CRL complexes prevents ubiquitination and subsequent degradation of the cyclin-dependent kinase inhibitors CDKN1A/p21 and CDKN1B/p27, leading to G1 and G2 cell cycle arrests in host cells. Also able to catalyze deamidation of 'Gln-40' of host ubiquitin in vitro; however, NEDD8 constitutes the preferred substrate in vivo. The sequence is that of Protein-glutamine deamidase Cif from Escherichia coli.